The following is a 137-amino-acid chain: Small ribosomal subunit protein uS12 (137 aa).

A compositionally biased stretch (polar residues) spans 31 to 41 (MSRKQTNNTAP). Residues 31–57 (MSRKQTNNTAPQKRGVATRVGTMTPKK) are disordered. At Asp-102 the chain carries 3-methylthioaspartic acid.

The protein belongs to the universal ribosomal protein uS12 family. As to quaternary structure, part of the 30S ribosomal subunit. Contacts proteins S8 and S17. May interact with IF1 in the 30S initiation complex.

Its function is as follows. With S4 and S5 plays an important role in translational accuracy. Interacts with and stabilizes bases of the 16S rRNA that are involved in tRNA selection in the A site and with the mRNA backbone. Located at the interface of the 30S and 50S subunits, it traverses the body of the 30S subunit contacting proteins on the other side and probably holding the rRNA structure together. The combined cluster of proteins S8, S12 and S17 appears to hold together the shoulder and platform of the 30S subunit. The protein is Small ribosomal subunit protein uS12 of Oenococcus oeni (strain ATCC BAA-331 / PSU-1).